Here is a 1304-residue protein sequence, read N- to C-terminus: Probable inactive serine/threonine-protein kinase fnkC (1304 aa).

Residues 33–402 (FEIIRILKKD…TNLLLTHKFI (370 aa)) form the Protein kinase domain. ATP contacts are provided by residues 39-47 (LKKDEFSTT) and K68. The tract at residues 208–277 (KDNNNNNNNN…EAEGGGGGGE (70 aa)) is disordered. The segment covering 210 to 269 (NNNNNNNNNNNNNNNNNNNNNNNNNNNNNNANNSNNNTLNNLSIVNNNSSSSSNDNSSEA) has biased composition (low complexity). 5 FNIP repeats span residues 514-556 (HSKS…LGSD), 710-753 (FNQL…FGRC), 754-797 (FNQP…FGSQ), 798-841 (YNQP…FGES), and 900-943 (YNDI…FGCD). 2 MATH domains span residues 1025-1154 (QGSW…RIDA) and 1172-1291 (NQAF…NVSI).

This sequence belongs to the protein kinase superfamily. STE Ser/Thr protein kinase family.

The sequence is that of Probable inactive serine/threonine-protein kinase fnkC (fnkC) from Dictyostelium discoideum (Social amoeba).